The following is a 755-amino-acid chain: Protein MTSS 1 (755 aa).

In terms of domain architecture, IMD spans 1–250; the sequence is MEAVIEKECS…EQVILDLKGS (250 aa). Residues 108–155 are a coiled coil; the sequence is LQEQMEEWKKVANQLDKDHAKEYKKARQEIKKKSSDTLKLQKKAKKGR. Disordered stretches follow at residues 139-159 and 255-305; these read KKSS…GDIQ and SYQT…RSSN. At T258 the chain carries Phosphothreonine. Phosphoserine occurs at positions 261, 262, 271, and 322. The tract at residues 327 to 351 is disordered; that stretch reads QDAFQSKSPSPMPPEAPNQLSNGFS. Position 425 is a phosphothreonine (T425). Disordered regions lie at residues 428-470, 490-513, and 563-755; these read RRKE…TRPG, DTQR…TTPC, and QAKR…PRFS. The segment covering 443-453 has biased composition (low complexity); sequence TTASGPPAAAE. A Phosphothreonine modification is found at T603. Over residues 608–623 the composition is skewed to low complexity; that stretch reads PIPIKTPVIPVKTPTV. A phosphoserine mark is found at S644 and S647. Residues 656–671 show a composition bias toward polar residues; it reads GVTSMPSSMWSGQASV. A WH2 domain is found at 727–744; that stretch reads QGEDMLNAIRRGVKLKKT.

It belongs to the MTSS family. In terms of assembly, binds to actin. Binds to the cytoplasmic domain of receptor protein tyrosine phosphatase delta. In terms of tissue distribution, expressed in many tissues, including spleen, thymus, prostate, testis, uterus, colon, and peripheral blood.

It is found in the cytoplasm. It localises to the cytoskeleton. Its function is as follows. May be related to cancer progression or tumor metastasis in a variety of organ sites, most likely through an interaction with the actin cytoskeleton. The protein is Protein MTSS 1 of Homo sapiens (Human).